We begin with the raw amino-acid sequence, 224 residues long: Large ribosomal subunit protein bL25 (224 aa).

Residues 195 to 224 form a disordered region; it reads TVEEVDEAAEVDAADVPATEQGTDESKDGE. The span at 197 to 207 shows a compositional bias: acidic residues; the sequence is EEVDEAAEVDA.

This sequence belongs to the bacterial ribosomal protein bL25 family. CTC subfamily. Part of the 50S ribosomal subunit; part of the 5S rRNA/L5/L18/L25 subcomplex. Contacts the 5S rRNA. Binds to the 5S rRNA independently of L5 and L18.

This is one of the proteins that binds to the 5S RNA in the ribosome where it forms part of the central protuberance. The protein is Large ribosomal subunit protein bL25 of Psychrobacter cryohalolentis (strain ATCC BAA-1226 / DSM 17306 / VKM B-2378 / K5).